The chain runs to 753 residues: Serine/threonine-protein phosphatase with EF-hands 2 (753 aa).

Residues 21–46 (KAAALIQRWYRRYVARLEMRRRCTWS) enclose the IQ domain. A catalytic region spans residues 128–540 (ATALVEAFRL…PHIVQYQANK (413 aa)). Mn(2+) is bound by residues Asp179, His181, Asp208, and Asn240. The active-site Proton donor is the His241. A Mn(2+)-binding site is contributed by His292. 2 disordered regions span residues 318-382 (CKTR…GSLD) and 409-435 (VTGE…KPTQ). The span at 322–333 (QKSEKQMEEKRR) shows a compositional bias: basic and acidic residues. A compositionally biased stretch (low complexity) spans 348-361 (LPESRSLPSSPLRL). A compositionally biased stretch (polar residues) spans 366–377 (AQKTSRSSSIPC). His488 is a binding site for Mn(2+). 3 consecutive EF-hand domains span residues 568–603 (AHSS…VLHL), 652–687 (RNRS…FSSH), and 692–727 (ITDD…VEKS). 9 residues coordinate Ca(2+): Asp665, Asp667, Ser669, Glu676, Asp705, Asn707, Asp709, His711, and Glu716. The disordered stretch occupies residues 732–753 (DASECPQATNAKDSGCSSPGAH). The span at 737–753 (PQATNAKDSGCSSPGAH) shows a compositional bias: polar residues.

The protein belongs to the PPP phosphatase family. The cofactor is Mn(2+). As to expression, retinal specific.

Its subcellular location is the cytoplasm. It localises to the cell projection. The protein localises to the cilium. The protein resides in the photoreceptor outer segment. It is found in the photoreceptor inner segment. The enzyme catalyses O-phospho-L-seryl-[protein] + H2O = L-seryl-[protein] + phosphate. It catalyses the reaction O-phospho-L-threonyl-[protein] + H2O = L-threonyl-[protein] + phosphate. Its activity is regulated as follows. Activated by calcium. Functionally, may play a role in phototransduction. May dephosphorylate photoactivated rhodopsin. May function as a calcium sensing regulator of ionic currents, energy production or synaptic transmission. In Homo sapiens (Human), this protein is Serine/threonine-protein phosphatase with EF-hands 2 (PPEF2).